A 979-amino-acid chain; its full sequence is Calsyntenin-1 (979 aa).

Residues 1–28 (MLRRPAPALAPAVRLLLAGLLCGGGVWA) form the signal peptide. Topologically, residues 29 to 859 (ARVNKHKPWL…PHPFAVVPST (831 aa)) are extracellular. 2 consecutive Cadherin domains span residues 38 to 164 (LEPT…APVF) and 165 to 265 (KEKS…SPGW). N-linked (GlcNAc...) asparagine glycosylation is found at asparagine 346, asparagine 366, and asparagine 515. The chain crosses the membrane as a helical span at residues 860 to 880 (ATVVIVVCVSFLVFMIILGVF). The Cytoplasmic segment spans residues 881–979 (RIRAAHQRTM…LEWDDSTLSY (99 aa)). Positions 915 to 979 (METYEDQHSS…LEWDDSTLSY (65 aa)) are disordered. Over residues 925-959 (EEEEEEEEEEESEDGEEEEDITSAESESSEEEEGG) the composition is skewed to acidic residues.

It belongs to the calsyntenin family. Directly interacts with APBA2. Forms a tripartite complex with APBA2 and APP. The CTF1 chain interacts with PSEN1. Interacts with KLC1 and APBB1. As to quaternary structure, interacts with APBB1; this interaction stabilizes AlcICD metabolism. In terms of assembly, interacts with PSEN1. Post-translationally, proteolytically processed under normal cellular conditions. A primary zeta-cleavage generates a large extracellular (soluble) N-terminal domain (sAlc) and a short C-terminal transmembrane fragment (CTF1). A secondary cleavage catalyzed by presenilin gamma-secretase within the transmembrane domain releases the beta-Alc-alpha chain in the extracellular milieu and produces an intracellular fragment (AlcICD). Beta-Alc-alpha secretion is largely dependent upon PSEN1 and PSEN2. This processing is strongly suppressed in the tripartite complex formed with APBA2 and APP, which seems to prevent the association with PSEN1. In terms of tissue distribution, highly expressed in the brain (at protein level), with over 90% of the neurons expressing detectable amounts. In the brain, relatively high levels in the cerebral cortex, striatum, hippocampus and thalamus. Moderate levels in the cerebellum. Low levels in the olfactory bulb, midbrain and pons (at protein level). Not detected in Purkinje cells. Expressed at low levels in the lung (at protein level). At the mRNA level, weakly detected in the kidney, lung, skeletal muscle, heart and testis. Not expressed in the sciatic nerve fiber.

The protein resides in the postsynaptic cell membrane. It localises to the endoplasmic reticulum membrane. It is found in the golgi apparatus membrane. The protein localises to the cell projection. Its subcellular location is the neuron projection. The protein resides in the vesicle. It localises to the nucleus. Its function is as follows. Postsynaptic adhesion molecule that binds to presynaptic neurexins to mediate both excitatory and inhibitory synapse formation. Promotes synapse development by acting as a cell adhesion molecule at the postsynaptic membrane, which associates with neurexin-alpha at the presynaptic membrane. Also functions as a cargo in axonal anterograde transport by acting as a molecular adapter that promotes KLC1 association with vesicles. Complex formation with APBA2 and APP, stabilizes APP metabolism and enhances APBA2-mediated suppression of beta-APP40 secretion, due to the retardation of intracellular APP maturation. Functionally, as intracellular fragment AlcICD, suppresses APBB1-dependent transactivation stimulated by APP C-terminal intracellular fragment (AICD), most probably by competing with AICD for APBB1-binding. In terms of biological role, in complex with APBA2 and C99, a C-terminal APP fragment, abolishes C99 interaction with PSEN1 and thus APP C99 cleavage by gamma-secretase, most probably through stabilization of the direct interaction between APBA2 and APP. The sequence is that of Calsyntenin-1 from Mus musculus (Mouse).